A 319-amino-acid chain; its full sequence is Cytochrome f (319 aa).

An N-terminal signal peptide occupies residues 1–35; that stretch reads MQKKDVCEYITKWVSVTISTLVTIGVLVFPLSSEA. 4 residues coordinate heme: Y36, C56, C59, and H60. The helical transmembrane segment at 285–305 threads the bilayer; it reads IQGLLVFFASVVLAQIFLVLK.

This sequence belongs to the cytochrome f family. As to quaternary structure, the 4 large subunits of the cytochrome b6-f complex are cytochrome b6, subunit IV (17 kDa polypeptide, petD), cytochrome f and the Rieske protein, while the 4 small subunits are PetG, PetL, PetM and PetN. The complex functions as a dimer. The cofactor is heme.

The protein localises to the plastid. It localises to the chloroplast thylakoid membrane. In terms of biological role, component of the cytochrome b6-f complex, which mediates electron transfer between photosystem II (PSII) and photosystem I (PSI), cyclic electron flow around PSI, and state transitions. The protein is Cytochrome f of Zygnema circumcarinatum (Green alga).